Consider the following 214-residue polypeptide: Redox-sensing transcriptional repressor Rex (214 aa).

The H-T-H motif DNA-binding region spans 17–56 (KYHRYLEELLKSDVDRISSKELSEKIGFTASQIRQDLNCF). 91–96 (GAGNIG) is a binding site for NAD(+).

This sequence belongs to the transcriptional regulatory Rex family. As to quaternary structure, homodimer.

It is found in the cytoplasm. Its function is as follows. Modulates transcription in response to changes in cellular NADH/NAD(+) redox state. In Clostridium acetobutylicum (strain ATCC 824 / DSM 792 / JCM 1419 / IAM 19013 / LMG 5710 / NBRC 13948 / NRRL B-527 / VKM B-1787 / 2291 / W), this protein is Redox-sensing transcriptional repressor Rex.